The primary structure comprises 512 residues: Cytoplasmic tRNA 2-thiolation protein 2-A (512 aa).

The protein belongs to the CTU2/NCS2 family.

The protein localises to the cytoplasm. Its pathway is tRNA modification; 5-methoxycarbonylmethyl-2-thiouridine-tRNA biosynthesis. Functionally, plays a central role in 2-thiolation of mcm(5)S(2)U at tRNA wobble positions of tRNA(Lys), tRNA(Glu) and tRNA(Gln). May act by forming a heterodimer with ctu1/atpbd3 that ligates sulfur from thiocarboxylated urm1 onto the uridine of tRNAs at wobble position. The chain is Cytoplasmic tRNA 2-thiolation protein 2-A (ctu2-a) from Xenopus laevis (African clawed frog).